We begin with the raw amino-acid sequence, 443 residues long: Chorionicgonadotropic hormone-like protein (443 aa).

The span at 263–286 (RCAGRPCPRRHRRPCNASKSHRPM) shows a compositional bias: basic residues. Residues 263–292 (RCAGRPCPRRHRRPCNASKSHRPMRMQQRD) form a disordered region.

To mammalian CGHB.

Its subcellular location is the secreted. The protein localises to the cell wall. In terms of biological role, cell wall protein that resembles the beta subunit of human chorionic gonadotropin. Stimulates growth and change in morphology. In Stenotrophomonas maltophilia (Pseudomonas maltophilia), this protein is Chorionicgonadotropic hormone-like protein (xcg).